Consider the following 515-residue polypeptide: MAARAGFQSVAPSGGAGASGGAGAAAALGPGGTPGPPVRMGPAPGQGLYRSPMPGAAYPRPGMLPGSRMTPQGPSMGPPGYGGNPSVRPGLAQSGMDQSRKRPAPQQIQQVQQQAVQNRNHNAKKKKMADKILPQRIRELVPESQAYMDLLAFERKLDQTIMRKRLDIQEALKRPIKQKRKLRIFISNTFNPAKSDAEDGEGTVASWELRVEGRLLEDSALSKYDATKQKRKFSSFFKSLVIELDKDLYGPDNHLVEWHRTATTQETDGFQVKRPGDVNVRCTVLLMLDYQPPQFKLDPRLARLLGIHTQTRPVIIQALWQYIKTHKLQDPHEREFVICDKYLQQIFESQRMKFSEIPQRLHALLMPPEPIIINHVISVDPNDQKKTACYDIDVEVDDTLKTQMNSFLLSTASQQEIATLDNKIHETIETINQLKTQREFMLSFARDPQGFINDWLQSQCRDLKTMTDVVGNPEEERRAEFYFQPWAQEAVCRYFYSKVQQRRQELEQALGIRNT.

A disordered region spans residues 1–103; it reads MAARAGFQSV…SGMDQSRKRP (103 aa). Over residues 14 to 23 the composition is skewed to gly residues; it reads GGAGASGGAG. An interaction with ESR1, NR1H4, NR3C1, PGR and SMARCA4 region spans residues 43-167; the sequence is APGQGLYRSP…DQTIMRKRLD (125 aa). An asymmetric dimethylarginine mark is found at Arg-68 and Arg-88. Residue Lys-101 forms a Glycyl lysine isopeptide (Lys-Gly) (interchain with G-Cter in SUMO2) linkage. The tract at residues 168–474 is interaction with SMARCC1 and SMARCC2; the sequence is IQEALKRPIK…TMTDVVGNPE (307 aa). The interval 180–515 is necessary for GR/NR3C1-mediated remodeling and transcription from chromatin; required for GR/NR3C1 interaction with the BRG1/SMARCA4 complex in vivo; that stretch reads RKLRIFISNT…LEQALGIRNT (336 aa). A Phosphothreonine modification is found at Thr-203. At Lys-223 the chain carries N6-acetyllysine. The region spanning 290–367 is the SWIB/MDM2 domain; sequence YQPPQFKLDP…PQRLHALLMP (78 aa). Residues 412-440 adopt a coiled-coil conformation; the sequence is ASQQEIATLDNKIHETIETINQLKTQREF.

Belongs to the SMARCD family. Component of the multiprotein chromatin-remodeling complexes SWI/SNF: SWI/SNF-A (BAF), SWI/SNF-B (PBAF) and related complexes. The canonical complex contains a catalytic subunit (either SMARCA4/BRG1/BAF190A or SMARCA2/BRM/BAF190B), and at least SMARCE1, ACTL6A/BAF53, SMARCC1/BAF155, SMARCC2/BAF170, and SMARCB1/SNF5/BAF47. Other subunits specific to each of the complexes may also be present permitting several possible combinations developmentally and tissue specific. Component of the BAF complex, which includes at least actin (ACTB), ARID1A/BAF250A, ARID1B/BAF250B, SMARCA2/BRM, SMARCA4/BRG1/BAF190A, ACTL6A/BAF53, ACTL6B/BAF53B, SMARCE1/BAF57, SMARCC1/BAF155, SMARCC2/BAF170, SMARCB1/SNF5/INI1, and one or more SMARCD1/BAF60A, SMARCD2/BAF60B, or SMARCD3/BAF60C. In muscle cells, the BAF complex also contains DPF3. Component of neural progenitors-specific chromatin remodeling complex (npBAF complex) composed of at least, ARID1A/BAF250A or ARID1B/BAF250B, SMARCD1/BAF60A, SMARCD3/BAF60C, SMARCA2/BRM/BAF190B, SMARCA4/BRG1/BAF190A, SMARCB1/BAF47, SMARCC1/BAF155, SMARCE1/BAF57, SMARCC2/BAF170, PHF10/BAF45A, ACTL6A/BAF53A and actin. Component of neuron-specific chromatin remodeling complex (nBAF complex) composed of at least, ARID1A/BAF250A or ARID1B/BAF250B, SMARCD1/BAF60A, SMARCD3/BAF60C, SMARCA2/BRM/BAF190B, SMARCA4/BRG1/BAF190A, SMARCB1/BAF47, SMARCC1/BAF155, SMARCE1/BAF57, SMARCC2/BAF170, DPF1/BAF45B, DPF3/BAF45C, ACTL6B/BAF53B and actin. Component of the SWI/SNF-B (PBAF) chromatin remodeling complex, at least composed of SMARCA4/BRG1, SMARCB1/BAF47/SNF5, ACTL6A/BAF53A or ACTL6B/BAF53B, SMARCE1/BAF57, SMARCD1/BAF60A, SMARCD2/BAF60B, perhaps SMARCD3/BAF60C, SMARCC1/BAF155, SMARCC2/BAF170, PBRM1/BAF180, ARID2/BAF200 and actin (ACTB). Component of SWI/SNF (GBAF) subcomplex, which includes at least BICRA or BICRAL (mutually exclusive), BRD9, SS18, SMARCA2/BRM, SMARCA4/BRG1/BAF190A, ACTL6A/BAF53, SMARCC1/BAF155, and SMARCD1/BAF60A. Specifically interacts with the VDR heterodimer complex. Interacts with ESR1, NR3C1, NR1H4, PGR, SMARCA4, SMARCC1 and SMARCC2. Interacts with DPF2. Interacts with DPF3a (isoform 2 of DPF3/BAF45C) and with HDGFL2 in a DPF3a-dependent manner. Interacts with FOS, FOSB isoform 1 and 2, FOSL1 and FOSL2. As to expression, expressed in all tissues tested, including brain, heart, kidney, liver, lung, muscle, pancreas and placenta.

Its subcellular location is the nucleus. Involved in transcriptional activation and repression of select genes by chromatin remodeling (alteration of DNA-nucleosome topology). Component of SWI/SNF chromatin remodeling complexes that carry out key enzymatic activities, changing chromatin structure by altering DNA-histone contacts within a nucleosome in an ATP-dependent manner. Belongs to the neural progenitors-specific chromatin remodeling complex (npBAF complex) and the neuron-specific chromatin remodeling complex (nBAF complex). During neural development a switch from a stem/progenitor to a postmitotic chromatin remodeling mechanism occurs as neurons exit the cell cycle and become committed to their adult state. The transition from proliferating neural stem/progenitor cells to postmitotic neurons requires a switch in subunit composition of the npBAF and nBAF complexes. As neural progenitors exit mitosis and differentiate into neurons, npBAF complexes which contain ACTL6A/BAF53A and PHF10/BAF45A, are exchanged for homologous alternative ACTL6B/BAF53B and DPF1/BAF45B or DPF3/BAF45C subunits in neuron-specific complexes (nBAF). The npBAF complex is essential for the self-renewal/proliferative capacity of the multipotent neural stem cells. The nBAF complex along with CREST plays a role regulating the activity of genes essential for dendrite growth. Has a strong influence on vitamin D-mediated transcriptional activity from an enhancer vitamin D receptor element (VDRE). May be a link between mammalian SWI-SNF-like chromatin remodeling complexes and the vitamin D receptor (VDR) heterodimer. Mediates critical interactions between nuclear receptors and the BRG1/SMARCA4 chromatin-remodeling complex for transactivation. Interacts with AKIRIN2. The chain is SWI/SNF-related matrix-associated actin-dependent regulator of chromatin subfamily D member 1 from Homo sapiens (Human).